Reading from the N-terminus, the 303-residue chain is Probable cell division protein WhiA (303 aa).

The segment at residues 272–303 is a DNA-binding region (H-T-H motif); sequence SIQQVADALEFPITKSGVNHRLRKINKIADDL.

This sequence belongs to the WhiA family.

Involved in cell division and chromosome segregation. The protein is Probable cell division protein WhiA of Streptococcus pyogenes serotype M12 (strain MGAS2096).